A 309-amino-acid chain; its full sequence is Jacalin-related lectin 25 (309 aa).

One can recognise a Jacalin-type lectin domain in the interval 8–190 (MFKVGPIGSQ…LTSIGIYVCP (183 aa)).

It belongs to the jacalin lectin family.

This is Jacalin-related lectin 25 (JAL25) from Arabidopsis thaliana (Mouse-ear cress).